A 96-amino-acid polypeptide reads, in one-letter code: UPF0235 protein YpsIP31758_0827 (96 aa).

Belongs to the UPF0235 family.

This is UPF0235 protein YpsIP31758_0827 from Yersinia pseudotuberculosis serotype O:1b (strain IP 31758).